Consider the following 232-residue polypeptide: Peptidoglycan-recognition protein LB (232 aa).

The first 15 residues, 1–15, serve as a signal peptide directing secretion; that stretch reads MTALGLVLLSMMGYS. The region spanning 53 to 179 is the N-acetylmuramoyl-L-alanine amidase domain; sequence APYVIIHHSY…RQVRDTECPG (127 aa). Position 59 (H59) interacts with Zn(2+). The cysteines at positions 67 and 73 are disulfide-linked. Zn(2+) contacts are provided by H169 and C177. A glycan (N-linked (GlcNAc...) asparagine) is linked at N196. Positions 213–232 are disordered; sequence HPQAAAPQKPHQSPPAAPKV.

This sequence belongs to the N-acetylmuramoyl-L-alanine amidase 2 family. In terms of assembly, monomer. Requires Zn(2+) as cofactor. As to expression, widely expressed.

The protein localises to the secreted. The catalysed reaction is Hydrolyzes the link between N-acetylmuramoyl residues and L-amino acid residues in certain cell-wall glycopeptides.. Its function is as follows. N-acetylmuramyl-L-alanine amidase involved in innate immunity by degrading bacterial peptidoglycans (PGN). Probably plays a scavenger role by digesting biologically active PGN into biologically inactive fragments. Has no direct bacteriolytic activity. The sequence is that of Peptidoglycan-recognition protein LB (PGRP-LB) from Drosophila melanogaster (Fruit fly).